A 386-amino-acid polypeptide reads, in one-letter code: Hydrazine synthase subunit beta (386 aa).

Residues 1-34 form the signal peptide; the sequence is MVIRRKMNKMIRKGMIGAVMLGAAVAISGGVATA.

Part of the hydrazine synthase complex that forms an elongated dimer of heterotrimers composed of one alpha, one beta and one gamma subunit.

It is found in the anammoxosome. It participates in nitrogen metabolism. Functionally, component of the hydrazine synthase complex that catalyzes the condensation of nitric oxide (NO) with ammonium to form hydrazine. The beta subunit may play a role in modulating transport of the hydroxylamine intermediate through a tunnel between the gamma and alpha subunit's active site. Is involved in anaerobic ammonium oxidation (anammox), a biological process in which nitrite is used as the electron acceptor in the conversion of ammonium to dinitrogen gas (N2) and water; this bacterial process has a major role in the Earth's nitrogen cycle and has been estimated to synthesize up to 50% of the dinitrogen gas emitted into our atmosphere from the oceans. This is Hydrazine synthase subunit beta from Kuenenia stuttgartiensis.